Here is a 143-residue protein sequence, read N- to C-terminus: Actin-depolymerizing factor 2 (143 aa).

The 135-residue stretch at 5 to 139 (ASGMAVHDDC…GLDVFRSRAG (135 aa)) folds into the ADF-H domain.

The protein belongs to the actin-binding proteins ADF family.

Functionally, actin-depolymerizing protein. Severs actin filaments (F-actin) and binds to actin monomers. In Petunia hybrida (Petunia), this protein is Actin-depolymerizing factor 2 (ADF2).